The following is a 227-amino-acid chain: Cell wall mannoprotein CIS3 (227 aa).

The N-terminal stretch at 1-21 (MQFKNVALAASVAALSATASA) is a signal peptide. A propeptide spanning residues 22-64 (EGYTPGEPWSTLTPTGSISCGAAEYTTTFGIAVQAITSSKAKR) is cleaved from the precursor. The stretch at 65–78 (DVISQIGDGQVQAT) is one PIR1/2/3 repeat. The O-linked (Man) serine glycan is linked to Ser-68. The O-linked (Man) threonine glycan is linked to Thr-78. The segment covering 83–124 (AQATDSQAQATTTATPTSSEKISSSASKTSTNATSSSCATPS) has biased composition (low complexity). The tract at residues 83–127 (AQATDSQAQATTTATPTSSEKISSSASKTSTNATSSSCATPSLKD) is disordered. 4 O-linked (Man) serine glycosylation sites follow: Ser-105, Ser-106, Ser-107, and Ser-109. A glycan (O-linked (Man) threonine) is linked at Thr-111. Ser-112 is a glycosylation site (O-linked (Man) serine). An O-linked (Man) threonine glycan is attached at Thr-113. Residue Asn-114 is glycosylated (N-linked (GlcNAc...) asparagine). Residue Thr-116 is glycosylated (O-linked (Man) threonine). O-linked (Man) serine glycans are attached at residues Ser-117 and Ser-118.

It belongs to the PIR protein family. Covalently linked to beta-1,3-glucan of the inner cell wall layer via an alkali-sensitive ester linkage between the gamma-carboxyl group of glutamic acid, arising from Gln-74 within the PIR1/2/3 repeat, and hydroxyl groups of glucoses of beta-1,3-glucan chains. Post-translationally, extensively O-mannosylated. Also N-glycosylated.

The protein resides in the secreted. It is found in the cell wall. Functionally, component of the outer cell wall layer. Required for stability of the cell wall and for optimal growth. Required for resistance against several antifungal and cell wall-perturbing agents. The protein is Cell wall mannoprotein CIS3 (CIS3) of Saccharomyces cerevisiae (strain ATCC 204508 / S288c) (Baker's yeast).